We begin with the raw amino-acid sequence, 44 residues long: Antimicrobial peptide 2 (44 aa).

Disulfide bonds. As to expression, expressed in flowers but not in leaves, seeds or roots (at protein level).

Antimicrobial peptide. Active against fungal species B.cinerea (IC(50)=5.2 uM), A.niger (IC(50)=2.6 uM) and B.sorokinina (IC(50)=5.2 uM) but not against F.oxysporum, F.graminearum and P.debaryanum at concentrations below 10 uM. Inhibits growth of P.infestans at concentration between 1.3 uM and 5.2 uM. Active against bacterial species P.syringae, B.subtilis, X.campestris and C.michiganense. This chain is Antimicrobial peptide 2, found in Taraxacum officinale (Common dandelion).